Reading from the N-terminus, the 122-residue chain is Large ribosomal subunit protein uL14c (122 aa).

This sequence belongs to the universal ribosomal protein uL14 family. As to quaternary structure, part of the 50S ribosomal subunit.

Its subcellular location is the plastid. The protein resides in the chloroplast. Its function is as follows. Binds to 23S rRNA. The protein is Large ribosomal subunit protein uL14c of Fagopyrum esculentum subsp. ancestrale (Wild buckwheat).